A 252-amino-acid chain; its full sequence is Phosphate import ATP-binding protein PstB 1 (252 aa).

Positions 6-247 (LQIRDLSVYY…PKRKETEDYI (242 aa)) constitute an ABC transporter domain. Position 38–45 (38–45 (GPSGSGKS)) interacts with ATP.

Belongs to the ABC transporter superfamily. Phosphate importer (TC 3.A.1.7) family. In terms of assembly, the complex is composed of two ATP-binding proteins (PstB), two transmembrane proteins (PstC and PstA) and a solute-binding protein (PstS).

The protein resides in the cell membrane. It catalyses the reaction phosphate(out) + ATP + H2O = ADP + 2 phosphate(in) + H(+). In terms of biological role, part of the ABC transporter complex PstSACB involved in phosphate import. Responsible for energy coupling to the transport system. This chain is Phosphate import ATP-binding protein PstB 1, found in Streptococcus pyogenes serotype M6 (strain ATCC BAA-946 / MGAS10394).